The sequence spans 256 residues: Triosephosphate isomerase (256 aa).

Residue 9–11 (NWK) participates in substrate binding. Residue His97 is the Electrophile of the active site. The active-site Proton acceptor is the Glu169. Substrate-binding positions include Gly175, Ser214, and 235–236 (GG).

It belongs to the triosephosphate isomerase family. As to quaternary structure, homodimer.

It localises to the cytoplasm. The enzyme catalyses D-glyceraldehyde 3-phosphate = dihydroxyacetone phosphate. Its pathway is carbohydrate biosynthesis; gluconeogenesis. It functions in the pathway carbohydrate degradation; glycolysis; D-glyceraldehyde 3-phosphate from glycerone phosphate: step 1/1. Its function is as follows. Involved in the gluconeogenesis. Catalyzes stereospecifically the conversion of dihydroxyacetone phosphate (DHAP) to D-glyceraldehyde-3-phosphate (G3P). This chain is Triosephosphate isomerase, found in Vibrio parahaemolyticus serotype O3:K6 (strain RIMD 2210633).